The following is a 250-amino-acid chain: MSAELNVPMDPSAPACPEPGHKGMDYRDWVRRSYLELVTSNHHSVQALSWRKLYLSRAKLKASSRTSALLSGFAMVAMVEVQLETKYQYPQPLLIAFSACTTVLVAVHLFALLISTCILPNVEAVSNIHNLNSISESPHERMHPYIELAWGFSTVLGILLFLAEVVLLCWIKFLPVDAKDQPGSHSHTGWQAALVSTIIMVPVGLIFVVFTIHFYRSLVRHKTERHNREIEELHKLKVQLDGHERSLQVV.

4 helical membrane passes run 66–83 (TSAL…EVQL), 94–114 (LIAF…ALLI), 148–168 (LAWG…VVLL), and 192–212 (AALV…VFTI).

It belongs to the Orai family. As to quaternary structure, oligomerizes in homomeric and heteromeric ORAI complexes. Native CRAC channels most likely consist of hexameric ORAI heteromers, implying that diverse ORAI1, ORAI2 and ORAI3 subunit combinations with distinct biophysical properties can operate in a cell-type specific way. Interacts with STIM1; this regulates channel activity. Interacts with CRACR2A/EFCAB4B.

It localises to the cell membrane. The enzyme catalyses Ca(2+)(in) = Ca(2+)(out). With respect to regulation, CRAC channels are regulated by fast Ca(2+)-dependent inactivation (FCDI), a mechanism that limits Ca(2+) influx and cell toxicity. ORAI2 channels display prominent FCDI. Inhibited by lanthanides such as Gd(3+) ions. Functionally, pore-forming subunit of inward rectifying Ca(2+) release-activated Ca(2+) (CRAC) channels. Assembles with ORAI1 and ORAI3 to form hexameric CRAC channels that mediate Ca(2+) influx upon depletion of endoplasmic reticulum Ca(2+) store and channel activation by Ca(2+) sensor STIM1, a process known as store-operated Ca(2+) entry (SOCE). Various pore subunit combinations may account for distinct CRAC channel spatiotemporal and cell-type specific dynamics. ORAI1 mainly contributes to the generation of Ca(2+) plateaus involved in sustained Ca(2+) entry and is dispensable for cytosolic Ca(2+) oscillations, whereas ORAI2 and ORAI3 generate oscillatory patterns. CRAC channels assemble in Ca(2+) signaling microdomains where Ca(2+) influx is coupled to calmodulin and calcineurin signaling and activation of NFAT transcription factors recruited to ORAI1 via AKAP5. CRAC channels are the main pathway for Ca(2+) influx in T cells and promote the immune response to pathogens by activating NFAT-dependent cytokine and chemokine transcription. The chain is Protein orai-2 (Orai2) from Mus musculus (Mouse).